Here is a 179-residue protein sequence, read N- to C-terminus: Inner membrane-spanning protein YciB (179 aa).

The next 5 helical transmembrane spans lie at F3 to Y23, P49 to H69, W76 to W96, V121 to F141, and F149 to L169.

It belongs to the YciB family.

Its subcellular location is the cell inner membrane. Plays a role in cell envelope biogenesis, maintenance of cell envelope integrity and membrane homeostasis. This Cupriavidus metallidurans (strain ATCC 43123 / DSM 2839 / NBRC 102507 / CH34) (Ralstonia metallidurans) protein is Inner membrane-spanning protein YciB.